Here is a 177-residue protein sequence, read N- to C-terminus: Large ribosomal subunit protein uL6 (177 aa).

The protein belongs to the universal ribosomal protein uL6 family. In terms of assembly, part of the 50S ribosomal subunit.

In terms of biological role, this protein binds to the 23S rRNA, and is important in its secondary structure. It is located near the subunit interface in the base of the L7/L12 stalk, and near the tRNA binding site of the peptidyltransferase center. The sequence is that of Large ribosomal subunit protein uL6 from Azorhizobium caulinodans (strain ATCC 43989 / DSM 5975 / JCM 20966 / LMG 6465 / NBRC 14845 / NCIMB 13405 / ORS 571).